Here is a 130-residue protein sequence, read N- to C-terminus: MAKAPKANTPKVTSTSSAVLTDFQETFKTSKRAYFAQIEKYPKLKLIDTFCFFLVLLGVIQCTFIILIRDNFPFNAFLAGFIICVGQFVLLMSLRLQLCNSFPGISKNRAFAEFIVASLILHFVCLHFIN.

Residues 2 to 45 (AKAPKANTPKVTSTSSAVLTDFQETFKTSKRAYFAQIEKYPKLK) lie on the Cytoplasmic side of the membrane. The helical transmembrane segment at 46–66 (LIDTFCFFLVLLGVIQCTFII) threads the bilayer. The Lumenal portion of the chain corresponds to 67–71 (LIRDN). A helical transmembrane segment spans residues 72–92 (FPFNAFLAGFIICVGQFVLLM). The Cytoplasmic portion of the chain corresponds to 93-109 (SLRLQLCNSFPGISKNR). Residues 110-130 (AFAEFIVASLILHFVCLHFIN) traverse the membrane as a helical segment.

This sequence belongs to the DAD/OST2 family. In terms of assembly, component of the oligosaccharyltransferase (OST) complex, which appears to exist in two assemblies comprising OST1, OST2, OST4, OST5, STT3, SWP1, WPB1, and either OST3 or OST6. OST assembly occurs through the formation of 3 subcomplexes. Subcomplex 1 contains OST1 and OST5, subcomplex 2 contains STT3, OST3, and OST4, and subcomplex 3 contains OST2, WBP1, and SWP1. Interacts with SEC61 and SSS1.

It localises to the endoplasmic reticulum membrane. It functions in the pathway protein modification; protein glycosylation. Its function is as follows. Subunit of the oligosaccharyl transferase (OST) complex that catalyzes the initial transfer of a defined glycan (Glc(3)Man(9)GlcNAc(2) in eukaryotes) from the lipid carrier dolichol-pyrophosphate to an asparagine residue within an Asn-X-Ser/Thr consensus motif in nascent polypeptide chains, the first step in protein N-glycosylation. N-glycosylation occurs cotranslationally and the complex associates with the Sec61 complex at the channel-forming translocon complex that mediates protein translocation across the endoplasmic reticulum (ER). All subunits are required for a maximal enzyme activity. The sequence is that of Dolichyl-diphosphooligosaccharide--protein glycosyltransferase subunit OST2 (OST2) from Saccharomyces cerevisiae (strain ATCC 204508 / S288c) (Baker's yeast).